Here is a 1215-residue protein sequence, read N- to C-terminus: Homeodomain-interacting protein kinase 3 (1215 aa).

K27 participates in a covalent cross-link: Glycyl lysine isopeptide (Lys-Gly) (interchain with G-Cter in SUMO2). Positions 197–525 constitute a Protein kinase domain; the sequence is YEVLDFLGRG…PAETLNHPFV (329 aa). Residues 203–211 and K226 contribute to the ATP site; that span reads LGRGTFGQV. D322 functions as the Proton acceptor in the catalytic mechanism. Y359 is subject to Phosphotyrosine. The interaction with AR stretch occupies residues 767-944; that stretch reads QNRGILVKLM…NSMSDEEQES (178 aa). An interaction with FAS region spans residues 796 to 891; sequence NTNIPHSAFI…SQRHSLRECK (96 aa). The tract at residues 855–1011 is required for localization to nuclear speckles; that stretch reads QTIIIADSPS…ENGLNADEHM (157 aa). The interval 866 to 918 is SUMO interaction motifs (SIM); required for nuclear localization and kinase activity; it reads AVSVITISSDTDEEETSQRHSLRECKGSLDCEACQSTLNIDRMCSLSSPDSTL. The tract at residues 870 to 880 is interaction with UBL1; sequence ITISSDTDEEE. Residues 912-929 show a composition bias toward low complexity; it reads SSPDSTLSTSSSGQSSPS. Residues 912-987 form a disordered region; sequence SSPDSTLSTS…ELVSSADTET (76 aa). A compositionally biased stretch (polar residues) spans 945 to 957; sequence SCDTVDGSPTSDS. K1208 is covalently cross-linked (Glycyl lysine isopeptide (Lys-Gly) (interchain with G-Cter in SUMO)).

The protein belongs to the protein kinase superfamily. CMGC Ser/Thr protein kinase family. HIPK subfamily. In terms of assembly, interacts with Nkx1-2. Interacts with FAS and DAXX. Probably part of a complex consisting of HIPK3, FAS and FADD. Interacts with and stabilizes ligand-bound androgen receptor (AR). Interacts with UBL1/SUMO-1. Binds to NR5A1/SF1, SPEN/MINT and RUNX2. In terms of processing, autophosphorylated, but autophosphorylation is not required for catalytic activity. Post-translationally, may be sumoylated. In terms of tissue distribution, overexpressed in multidrug resistant cells. Highly expressed in heart and skeletal muscle, and at lower levels in placenta, pancreas, brain, spleen, prostate, thymus, testis, small intestine, colon and leukocytes. Not found in liver and lung.

It is found in the cytoplasm. The protein resides in the nucleus. The catalysed reaction is L-seryl-[protein] + ATP = O-phospho-L-seryl-[protein] + ADP + H(+). It carries out the reaction L-threonyl-[protein] + ATP = O-phospho-L-threonyl-[protein] + ADP + H(+). In terms of biological role, serine/threonine-protein kinase involved in transcription regulation, apoptosis and steroidogenic gene expression. Phosphorylates JUN and RUNX2. Seems to negatively regulate apoptosis by promoting FADD phosphorylation. Enhances androgen receptor-mediated transcription. May act as a transcriptional corepressor for NK homeodomain transcription factors. The phosphorylation of NR5A1 activates SF1 leading to increased steroidogenic gene expression upon cAMP signaling pathway stimulation. In osteoblasts, supports transcription activation: phosphorylates RUNX2 that synergizes with SPEN/MINT to enhance FGFR2-mediated activation of the osteocalcin FGF-responsive element (OCFRE). This is Homeodomain-interacting protein kinase 3 (HIPK3) from Homo sapiens (Human).